The following is a 79-amino-acid chain: RNA-binding protein Hfq (79 aa).

In terms of domain architecture, Sm spans 10-70 (DAFLNHVRKT…ISTIMPAQPI (61 aa)).

Belongs to the Hfq family. As to quaternary structure, homohexamer.

Its function is as follows. RNA chaperone that binds small regulatory RNA (sRNAs) and mRNAs to facilitate mRNA translational regulation in response to envelope stress, environmental stress and changes in metabolite concentrations. Also binds with high specificity to tRNAs. This chain is RNA-binding protein Hfq, found in Ruegeria pomeroyi (strain ATCC 700808 / DSM 15171 / DSS-3) (Silicibacter pomeroyi).